A 336-amino-acid chain; its full sequence is Ketol-acid reductoisomerase (NADP(+)) (336 aa).

One can recognise a KARI N-terminal Rossmann domain in the interval 2 to 181 (AKVYYEKDVM…GATRAGVLET (180 aa)). Residues 25-28 (YGSQ), R48, S52, and 82-85 (DELQ) contribute to the NADP(+) site. H107 is an active-site residue. An NADP(+)-binding site is contributed by G133. In terms of domain architecture, KARI C-terminal knotted spans 182–327 (TFKEETETDL…RQLREMMPFV (146 aa)). Residues D190, E194, E226, and E230 each coordinate Mg(2+). S251 is a binding site for substrate.

Belongs to the ketol-acid reductoisomerase family. Mg(2+) is required as a cofactor.

It catalyses the reaction (2R)-2,3-dihydroxy-3-methylbutanoate + NADP(+) = (2S)-2-acetolactate + NADPH + H(+). The enzyme catalyses (2R,3R)-2,3-dihydroxy-3-methylpentanoate + NADP(+) = (S)-2-ethyl-2-hydroxy-3-oxobutanoate + NADPH + H(+). It participates in amino-acid biosynthesis; L-isoleucine biosynthesis; L-isoleucine from 2-oxobutanoate: step 2/4. It functions in the pathway amino-acid biosynthesis; L-valine biosynthesis; L-valine from pyruvate: step 2/4. In terms of biological role, involved in the biosynthesis of branched-chain amino acids (BCAA). Catalyzes an alkyl-migration followed by a ketol-acid reduction of (S)-2-acetolactate (S2AL) to yield (R)-2,3-dihydroxy-isovalerate. In the isomerase reaction, S2AL is rearranged via a Mg-dependent methyl migration to produce 3-hydroxy-3-methyl-2-ketobutyrate (HMKB). In the reductase reaction, this 2-ketoacid undergoes a metal-dependent reduction by NADPH to yield (R)-2,3-dihydroxy-isovalerate. This is Ketol-acid reductoisomerase (NADP(+)) from Bacillus cytotoxicus (strain DSM 22905 / CIP 110041 / 391-98 / NVH 391-98).